A 205-amino-acid polypeptide reads, in one-letter code: 5'-deoxynucleotidase HDDC2 (205 aa).

A2 is modified (N-acetylalanine). A phosphoserine mark is found at S3 and S5. Residues 47–149 (VSDHMYRMAV…VKQLDQCEMI (103 aa)) form the HD domain. A divalent metal cation contacts are provided by H50, H78, D79, E82, D87, I88, and D144. S205 carries the phosphoserine modification.

This sequence belongs to the HDDC2 family. Homodimer. Mn(2+) is required as a cofactor. Requires Co(2+) as cofactor. Mg(2+) serves as cofactor.

It carries out the reaction a 2'-deoxyribonucleoside 5'-phosphate + H2O = a 2'-deoxyribonucleoside + phosphate. Its function is as follows. Catalyzes the dephosphorylation of the nucleoside 5'-monophosphates deoxyadenosine monophosphate (dAMP), deoxycytidine monophosphate (dCMP), deoxyguanosine monophosphate (dGMP) and deoxythymidine monophosphate (dTMP). The chain is 5'-deoxynucleotidase HDDC2 (HDDC2) from Bos taurus (Bovine).